Here is a 137-residue protein sequence, read N- to C-terminus: Proofreading thioesterase EntH (137 aa).

The active-site Nucleophile or proton acceptor is the Glu-63.

This sequence belongs to the thioesterase PaaI family. As to quaternary structure, homotetramer. Dimer of dimers. Interacts specifically with the aryl carrier protein (ArCP) domain of EntB.

It localises to the cytoplasm. It functions in the pathway siderophore biosynthesis; enterobactin biosynthesis. Functionally, required for optimal enterobactin synthesis. Acts as a proofreading enzyme that prevents EntB misacylation by hydrolyzing the thioester bound existing between EntB and wrongly charged molecules. This is Proofreading thioesterase EntH from Escherichia coli O157:H7 (strain EC4115 / EHEC).